Here is a 238-residue protein sequence, read N- to C-terminus: Thrombin-like enzyme halystase (238 aa).

The region spanning I1–A229 is the Peptidase S1 domain. 6 disulfide bridges follow: C7–C141, C28–C44, C76–C236, C120–C190, C152–C169, and C180–C205. Catalysis depends on H43, which acts as the Charge relay system. N81 is a glycosylation site (N-linked (GlcNAc...) asparagine). The Charge relay system role is filled by D88. N-linked (GlcNAc...) asparagine glycosylation is present at N100. The active-site Charge relay system is S184.

Belongs to the peptidase S1 family. Snake venom subfamily. As to quaternary structure, monomer. As to expression, expressed by the venom gland.

Its subcellular location is the secreted. Its activity is regulated as follows. Inhibited by diisopropylfluorophosphate (DFP), PMSF and leupeptin. Thrombin-like snake venom serine protease. Cleaves fibrinogen (beta chain of fibrinogen (FGB) and more slowly alpha chain (FGA)) without inducing fibrin clotting and cleaves kininogen to produce bradykinin (KNG), resulting in the reduction of blood pressure. This Gloydius blomhoffii (Mamushi) protein is Thrombin-like enzyme halystase.